The following is a 275-amino-acid chain: 18S rRNA (guanine(1575)-N(7))-methyltransferase (275 aa).

Positions 256–275 are disordered; sequence RGRKVAKDSKFTGRKRRHRF. Positions 257-264 match the Nuclear localization signal motif; it reads GRKVAKDS.

This sequence belongs to the class I-like SAM-binding methyltransferase superfamily. BUD23/WBSCR22 family. As to quaternary structure, interacts with TRM112. Interacts with ECM16.

The protein resides in the cytoplasm. The protein localises to the nucleus. The enzyme catalyses guanosine(1575) in yeast 18S rRNA + S-adenosyl-L-methionine = N(7)-methylguanosine(1575) in yeast 18S rRNA + S-adenosyl-L-homocysteine. S-adenosyl-L-methionine-dependent methyltransferase that specifically methylates the N(7) position of guanine 1575 (m7G1575) in 18S rRNA. Requires the methyltransferase adapter protein TRM112 for full rRNA methyltransferase activity. Important for biogenesis end export of the 40S ribosomal subunit independent on its methyltransferase activity. Required for efficient cleavage of the primary 35S precursor rRNA at site A2. Involved in positioning the proximal bud pole signal. This Saccharomyces cerevisiae (strain ATCC 204508 / S288c) (Baker's yeast) protein is 18S rRNA (guanine(1575)-N(7))-methyltransferase (BUD23).